Reading from the N-terminus, the 112-residue chain is Putative transmembrane protein ORF112 (112 aa).

3 helical membrane-spanning segments follow: residues 26-46 (FWEV…GILV), 50-70 (ILVT…MYLF), and 80-100 (IFFP…LVGV).

It localises to the host membrane. The chain is Putative transmembrane protein ORF112 from Acidianus convivator (ABV).